Consider the following 136-residue polypeptide: Transcription antitermination protein NusB (136 aa).

It belongs to the NusB family.

Functionally, involved in transcription antitermination. Required for transcription of ribosomal RNA (rRNA) genes. Binds specifically to the boxA antiterminator sequence of the ribosomal RNA (rrn) operons. This is Transcription antitermination protein NusB from Salinispora tropica (strain ATCC BAA-916 / DSM 44818 / JCM 13857 / NBRC 105044 / CNB-440).